The sequence spans 72 residues: Penaeidin-2b (72 aa).

An N-terminal signal peptide occupies residues 1–21; sequence MRLVVCLVFLASFALVCQGEA. 3 disulfides stabilise this stretch: Cys45/Cys59, Cys48/Cys66, and Cys60/Cys67. Lys71 carries the post-translational modification Lysine amide.

It belongs to the penaeidin family.

The protein resides in the cytoplasmic granule. Its function is as follows. Antibacterial and antifungal activity. Presents chitin-binding activity. The chain is Penaeidin-2b from Penaeus vannamei (Whiteleg shrimp).